A 352-amino-acid chain; its full sequence is Fe(3+) ions import ATP-binding protein FbpC (352 aa).

One can recognise an ABC transporter domain in the interval leucine 5–isoleucine 239. An ATP-binding site is contributed by glycine 37–threonine 44.

This sequence belongs to the ABC transporter superfamily. Fe(3+) ion importer (TC 3.A.1.10) family. In terms of assembly, the complex is composed of two ATP-binding proteins (FbpC), two transmembrane proteins (FbpB) and a solute-binding protein (FbpA).

The protein localises to the cell inner membrane. The enzyme catalyses Fe(3+)(out) + ATP + H2O = Fe(3+)(in) + ADP + phosphate + H(+). In terms of biological role, part of the ABC transporter complex FbpABC involved in Fe(3+) ions import. Responsible for energy coupling to the transport system. In Neisseria gonorrhoeae, this protein is Fe(3+) ions import ATP-binding protein FbpC.